A 496-amino-acid chain; its full sequence is Glycerol kinase (496 aa).

Residue Thr-12 participates in ADP binding. Residues Thr-12, Thr-13, and Ser-14 each contribute to the ATP site. Thr-12 is a binding site for sn-glycerol 3-phosphate. Arg-16 contacts ADP. Sn-glycerol 3-phosphate contacts are provided by Arg-82, Glu-83, and Tyr-134. The glycerol site is built by Arg-82, Glu-83, and Tyr-134. Phosphohistidine; by HPr is present on His-230. Residue Asp-244 participates in sn-glycerol 3-phosphate binding. Positions 244 and 245 each coordinate glycerol. ADP contacts are provided by Thr-266 and Gly-309. 4 residues coordinate ATP: Thr-266, Gly-309, Gln-313, and Gly-410. Residues Gly-410 and Asn-414 each contribute to the ADP site.

This sequence belongs to the FGGY kinase family. In terms of assembly, homotetramer and homodimer (in equilibrium). In terms of processing, the phosphoenolpyruvate-dependent sugar phosphotransferase system (PTS), including enzyme I, and histidine-containing protein (HPr) are required for the phosphorylation, which leads to the activation of the enzyme.

The enzyme catalyses glycerol + ATP = sn-glycerol 3-phosphate + ADP + H(+). Its pathway is polyol metabolism; glycerol degradation via glycerol kinase pathway; sn-glycerol 3-phosphate from glycerol: step 1/1. With respect to regulation, activated by phosphorylation and inhibited by fructose 1,6-bisphosphate (FBP). Key enzyme in the regulation of glycerol uptake and metabolism. Catalyzes the phosphorylation of glycerol to yield sn-glycerol 3-phosphate. In Bacillus cereus (strain ATCC 14579 / DSM 31 / CCUG 7414 / JCM 2152 / NBRC 15305 / NCIMB 9373 / NCTC 2599 / NRRL B-3711), this protein is Glycerol kinase.